A 587-amino-acid chain; its full sequence is MLNSRSVGSTGSNNTPLGRRRFDEKPDSLPPLPDANGMSNGYRDSYKSNSRMDHRPDGYHDGRGRRAYRKHYWGHPTPIEEMLPSQMELETAVKSCMTMEQLELYSLNVRLEEITQKLRTGDVVPHHRERSPSPPPQYDNHGRRLNTREIRYKKKLEDERHRIIERAMKMVPGFRAPSDYRRPAKTQEKVYVPVKDYPEINFIGLLIGPRGHTLKDMEAKSGAKIAIRGKGSVKEGKGRSDPSVRGNMEEDLHCLVTADSEDKINHAIKLIDNVIQTAASVPEGQNDLKRNQLRQLATLNGTLRDDENQVCQNCGNVGHRRFDCPERINHTMNIVCRHCGSIGHIARDCPVRDQQPPMADSTADREYQSLMQELGGGSAISNGNGEPQKSIEFSESGAASPQAGHPPPWAAASTSVSSSTSSPAPWAKPASSAAPSNPAPWQQPAAPQSAPALSMNPSSLPPWQQPTQQSAVQPSNLVPSQNAPFIPGTSAPLPPTTFAPPGVPLPPIPGAPGMPNLNMSQPPMVPPGMALPPGMPAPFPGYPAVPAMPGIPGATAPPGAPGSYNTSESSNLNAPPGVSMPNGYSNR.

The span at 1–16 (MLNSRSVGSTGSNNTP) shows a compositional bias: polar residues. Disordered regions lie at residues 1-64 (MLNS…DGRG) and 121-142 (GDVV…DNHG). A compositionally biased stretch (basic and acidic residues) spans 44–64 (DSYKSNSRMDHRPDGYHDGRG). 2 positions are modified to phosphoserine: S131 and S133. Residues 191 to 271 (YVPVKDYPEI…DKINHAIKLI (81 aa)) form the KH domain. CCHC-type zinc fingers lie at residues 309 to 326 (QVCQ…DCPE) and 334 to 351 (IVCR…DCPV). 2 disordered regions span residues 375–490 (GGGS…PGTS) and 551–587 (IPGA…YSNR). A compositionally biased stretch (polar residues) spans 379–399 (AISNGNGEPQKSIEFSESGAA). The segment covering 410-454 (AAASTSVSSSTSSPAPWAKPASSAAPSNPAPWQQPAAPQSAPALS) has biased composition (low complexity). Polar residues-rich tracts occupy residues 465-483 (QPTQ…SQNA) and 563-573 (SYNTSESSNLN).

The protein belongs to the BBP/SF1 family. As to quaternary structure, U2AF large subunit (u2af59), U2AF small subunit (u2af23) and bpb1 interact to form a complex required for complex A formation.

The protein localises to the cytoplasm. The protein resides in the nucleus. In terms of biological role, necessary for the splicing of pre-mRNA. The BPB1(SF1)-u2af59-u2af23 complex has a role in the recognition of the branch site (5'-UACUAAC-3'), the pyrimidine tract and the 3'-splice site at the 3'-end of introns. This chain is Branchpoint-bridging protein (bpb1), found in Schizosaccharomyces pombe (strain 972 / ATCC 24843) (Fission yeast).